The chain runs to 553 residues: Undecaprenyl phosphate-alpha-4-amino-4-deoxy-L-arabinose arabinosyl transferase 2 (553 aa).

The next 12 membrane-spanning stretches (helical) occupy residues 6–26, 85–105, 115–135, 137–157, 178–198, 208–228, 261–281, 295–315, 317–337, 352–372, 386–406, and 410–430; these read ASKI…LFPL, FAVR…IYLL, VAFV…VGTY, VLDP…FWAL, MAFM…MIPV, MLLY…PWVL, FWYY…LLPG, ELFF…IAKG, LPTY…KYGV, GYIN…IQLV, WVLA…CSTL, and HWLW…QAIP.

Belongs to the glycosyltransferase 83 family.

It localises to the cell inner membrane. The enzyme catalyses 4-amino-4-deoxy-alpha-L-arabinopyranosyl di-trans,octa-cis-undecaprenyl phosphate + lipid IVA = lipid IIA + di-trans,octa-cis-undecaprenyl phosphate.. The protein operates within lipopolysaccharide metabolism; 4-amino-4-deoxy-beta-L-arabinose-lipid A biosynthesis. Functionally, catalyzes the transfer of the L-Ara4N moiety of the glycolipid undecaprenyl phosphate-alpha-L-Ara4N to lipid A. The modified arabinose is attached to lipid A and is required for resistance to polymyxin and cationic antimicrobial peptides. This is Undecaprenyl phosphate-alpha-4-amino-4-deoxy-L-arabinose arabinosyl transferase 2 from Proteus mirabilis (strain HI4320).